We begin with the raw amino-acid sequence, 219 residues long: Glutathione S-transferase-like protein LUC7 (219 aa).

The 82-residue stretch at 3-84 (PFGRLYSFMP…YLAQSGPYSE (82 aa)) folds into the GST N-terminal domain. Residues 90–219 (DAATSAKIRQ…NLIDVKRVHE (130 aa)) form the GST C-terminal domain.

The protein belongs to the GST superfamily.

In terms of biological role, glutathione S-transferase-like protein; part of the gene cluster that mediates the biosynthesis of the mycotoxin lucilactaene and the lucilactaene-related compound NG-391 that act as cell cycle inhibitors with potent growth inhibitory activity against malarial parasites, moderate growth inhibitory activity against cancer cells, and no activity against bacteria and fungi. Within the cluster, LUC7 and LUC8 encode proteins which are not commonly involved in the biosynthesis of secondary metabolites and are not essential for lucilactaene biosynthesis. The sequence is that of Glutathione S-transferase-like protein LUC7 from Fusarium sp.